Consider the following 249-residue polypeptide: tRNA pseudouridine synthase A (249 aa).

D53 acts as the Nucleophile in catalysis. A substrate-binding site is contributed by Y111.

Belongs to the tRNA pseudouridine synthase TruA family. As to quaternary structure, homodimer.

It catalyses the reaction uridine(38/39/40) in tRNA = pseudouridine(38/39/40) in tRNA. Its function is as follows. Formation of pseudouridine at positions 38, 39 and 40 in the anticodon stem and loop of transfer RNAs. The chain is tRNA pseudouridine synthase A from Streptococcus pneumoniae serotype 19F (strain G54).